Reading from the N-terminus, the 129-residue chain is Capsid protein (129 aa).

Positions 31–104 are viral RNA-binding; the sequence is EWISSNSRSQ…FATNSDCELI (74 aa).

This sequence belongs to the Leviviricetes capsid protein family. In terms of assembly, homodimer. The capsid proteins form dimers that assemble by group of 5. Twelve such pentamers are linked together with free dimers. The homodimers binds to the viral RNA via an operator hairpin, but also to many other RNA sequences in the viral genome; this interaction probably shifts the virus from the replicative to the assembly phase and ensures specific encapsidation of the viral genome.

The protein localises to the virion. In terms of biological role, capsid protein self-assembles to form an icosahedral capsid with a T=3 symmetry, about 26 nm in diameter, and consisting of 89 capsid proteins dimers (178 capsid proteins). Involved in viral genome encapsidation through the interaction between a capsid protein dimer and the multiple packaging signals present in the RNA genome. The capsid also contains 1 copy of the A2 maturation protein. Acts as a translational repressor of viral replicase synthesis late in infection. This latter function is the result of capsid protein interaction with an RNA hairpin which contains the replicase ribosome-binding site. This chain is Capsid protein, found in Escherichia coli (Bacteriophage R17).